We begin with the raw amino-acid sequence, 268 residues long: MKGKTVSAALVGKLIALSVGVVACTQVKDETVGVGVLSEPHARLLEIAKEEVKKQHIELRIVEFTNYVALNEAVMRGDILMNFFQHVPHMQQFNQEHNGDLVSVGNVHVEPLALYSRTYRHVSDFPAGAVIAIPNDSSNEARALRLLEAAGFIRMRAGSGLFATVEDVQQNVRNVVLQEVESALLPRVFDQVDGAVINGNYAIMAGLSARRDGLAVEPDASAYANVLVVKRGNEADARVQAVLRALCGGRVRTYLKERYKGGEVAPAL.

Positions 1 to 23 (MKGKTVSAALVGKLIALSVGVVA) are cleaved as a signal peptide. Cys-24 carries the N-palmitoyl cysteine lipid modification. Cys-24 carries S-diacylglycerol cysteine lipidation.

Belongs to the NlpA lipoprotein family.

The protein localises to the cell membrane. This chain is Membrane lipoprotein TpN32 (tpn32), found in Treponema pallidum (strain Nichols).